The chain runs to 83 residues: Putative potassium channel toxin Ts20 (83 aa).

A signal peptide spans 1–18; that stretch reads MKLDIVLIMFVTFSTTLA.

Post-translationally, contains 3 disulfide bonds. Expressed by the venom gland.

The protein resides in the secreted. Its function is as follows. Reversibly inhibits potassium channels. This is Putative potassium channel toxin Ts20 from Tityus serrulatus (Brazilian scorpion).